Reading from the N-terminus, the 186-residue chain is Large ribosomal subunit protein uL10 (186 aa).

In terms of assembly, part of the ribosomal stalk of the 50S ribosomal subunit. The N-terminus interacts with L11 and the large rRNA to form the base of the stalk. The C-terminus forms an elongated spine to which L12 dimers bind in a sequential fashion forming a multimeric L10(L12)X complex.

Functionally, forms part of the ribosomal stalk, playing a central role in the interaction of the ribosome with GTP-bound translation factors. The chain is Large ribosomal subunit protein uL10 from Rhodopseudomonas palustris (strain ATCC BAA-98 / CGA009).